The chain runs to 356 residues: MHWSRFVGIFLVFSVFSLVNCQCDSGELFVVRFPTNPIMNNTRMCMTYDNDININFPTVIKTPIWLKNRLYPIIGRGPEYLKYFSDHHGKEIFVSYTDDLRGPWVVHAPGTLKLSQVLDAFNASSVNDTKSEIASADIYLDHANKTVRMYFHRRVPNDNYAIVSSIAYSKDGINFDNIDTRNIGSAYIRHFVHDGYIYLTDRVGKLWRSRDGVNNLEPGTTTIGDAFTNNSMVNGDGYTGLLRHLGLIKSGDYLYIYGTRIGDSPERILRTKMKLTNDWTTWNAEYPAKEGFRPETDYEGANLPNIPSKKGSANQPVNQLRDPFPFYDMGRCYMFYTVAGESGIAGARLPKCWENK.

An N-terminal signal peptide occupies residues 1 to 21 (MHWSRFVGIFLVFSVFSLVNC). The disordered stretch occupies residues 293-317 (RPETDYEGANLPNIPSKKGSANQPV).

This is an uncharacterized protein from Acanthamoeba polyphaga mimivirus (APMV).